The chain runs to 145 residues: Basic phospholipase A2 cPm08 (145 aa).

The N-terminal stretch at 1–21 (MYPAHLLVLLAVCVSLLGASA) is a signal peptide. Positions 22–27 (IPPLPL) are excised as a propeptide. Intrachain disulfides connect C38-C98, C54-C144, C56-C72, C71-C125, C78-C118, C87-C111, and C105-C116. Ca(2+) contacts are provided by Y55, G57, and G59. H75 is an active-site residue. A Ca(2+)-binding site is contributed by D76. Residue D119 is part of the active site.

This sequence belongs to the phospholipase A2 family. Group I subfamily. D49 sub-subfamily. Ca(2+) is required as a cofactor. As to expression, expressed by the venom gland.

It localises to the secreted. It catalyses the reaction a 1,2-diacyl-sn-glycero-3-phosphocholine + H2O = a 1-acyl-sn-glycero-3-phosphocholine + a fatty acid + H(+). PLA2 catalyzes the calcium-dependent hydrolysis of the 2-acyl groups in 3-sn-phosphoglycerides. This chain is Basic phospholipase A2 cPm08, found in Laticauda semifasciata (Black-banded sea krait).